The following is a 91-amino-acid chain: Putative transmembrane protein encoded by LINC00862 (91 aa).

Residues 49-69 form a helical membrane-spanning segment; that stretch reads IMALILMPSLHCFGNILILLF.

It is found in the membrane. The protein is Putative transmembrane protein encoded by LINC00862 (LINC00862) of Homo sapiens (Human).